The sequence spans 312 residues: Zygote arrest protein 1.L (312 aa).

Disordered stretches follow at residues 79–133 and 150–205; these read RDVG…VRFP and FQDK…DQTR. Composition is skewed to polar residues over residues 86-95 and 113-128; these read NPRQDASVQC and PQQS…SPTK. Basic and acidic residues predominate over residues 152–196; sequence DKGENLSEKTEALRSEGSRGEGGRPEGKQEDGEIKEQTKMDKADQ. The 3CxxC-type zinc-finger motif lies at 214–297; the sequence is KYGYYHCKDC…RQDLCGRCKG (84 aa).

The protein belongs to the ZAR1 family. In terms of tissue distribution, ovary.

It is found in the cytoplasm. The protein resides in the cytoplasmic ribonucleoprotein granule. In terms of biological role, mRNA-binding protein required for maternal mRNA storage, translation and degradation during oocyte maturation. Probably promotes formation of some phase-separated membraneless compartment that stores maternal mRNAs in oocytes: acts by undergoing liquid-liquid phase separation upon binding to maternal mRNAs. Binds to the 3'-UTR of maternal mRNAs in immature oocytes, inhibiting their translation. The protein is Zygote arrest protein 1.L of Xenopus laevis (African clawed frog).